The following is a 220-amino-acid chain: Translation initiation factor 6 (220 aa).

The protein belongs to the eIF-6 family.

Binds to the 50S ribosomal subunit and prevents its association with the 30S ribosomal subunit to form the 70S initiation complex. The polypeptide is Translation initiation factor 6 (Pyrobaculum arsenaticum (strain DSM 13514 / JCM 11321 / PZ6)).